The primary structure comprises 322 residues: DNA primase small subunit PriS (322 aa).

Active-site residues include D86, D88, and D226.

The protein belongs to the eukaryotic-type primase small subunit family. In terms of assembly, heterodimer of a small subunit (PriS) and a large subunit (PriL). Requires Mg(2+) as cofactor. It depends on Mn(2+) as a cofactor.

In terms of biological role, catalytic subunit of DNA primase, an RNA polymerase that catalyzes the synthesis of short RNA molecules used as primers for DNA polymerase during DNA replication. The small subunit contains the primase catalytic core and has DNA synthesis activity on its own. Binding to the large subunit stabilizes and modulates the activity, increasing the rate of DNA synthesis while decreasing the length of the DNA fragments, and conferring RNA synthesis capability. The DNA polymerase activity may enable DNA primase to also catalyze primer extension after primer synthesis. May also play a role in DNA repair. The polypeptide is DNA primase small subunit PriS (Thermoplasma acidophilum (strain ATCC 25905 / DSM 1728 / JCM 9062 / NBRC 15155 / AMRC-C165)).